Here is a 100-residue protein sequence, read N- to C-terminus: NADH-quinone oxidoreductase subunit K (100 aa).

3 consecutive transmembrane segments (helical) span residues 2 to 22 (IPLS…VAGF), 28 to 48 (IIVM…NLVA), and 64 to 84 (FVIT…ICLF).

It belongs to the complex I subunit 4L family. In terms of assembly, NDH-1 is composed of 14 different subunits. Subunits NuoA, H, J, K, L, M, N constitute the membrane sector of the complex.

Its subcellular location is the cell inner membrane. It carries out the reaction a quinone + NADH + 5 H(+)(in) = a quinol + NAD(+) + 4 H(+)(out). In terms of biological role, NDH-1 shuttles electrons from NADH, via FMN and iron-sulfur (Fe-S) centers, to quinones in the respiratory chain. The immediate electron acceptor for the enzyme in this species is believed to be ubiquinone. Couples the redox reaction to proton translocation (for every two electrons transferred, four hydrogen ions are translocated across the cytoplasmic membrane), and thus conserves the redox energy in a proton gradient. This is NADH-quinone oxidoreductase subunit K from Desulfovibrio desulfuricans (strain ATCC 27774 / DSM 6949 / MB).